The primary structure comprises 461 residues: Chromosomal replication initiator protein DnaA (461 aa).

The tract at residues 1–87 (MAVSLWQQCI…IGSRPSAKPV (87 aa)) is domain I, interacts with DnaA modulators. The interval 87 to 124 (VVQATAAIRPKPAASKAVEKPTFNAPQAEPAITANHRS) is domain II. The tract at residues 125-341 (NINPTYQFDN…GALNRVIANA (217 aa)) is domain III, AAA+ region. ATP contacts are provided by Gly169, Gly171, Lys172, and Thr173. Positions 342-461 (NFTGRPITID…YANLIRTLSS (120 aa)) are domain IV, binds dsDNA.

This sequence belongs to the DnaA family. In terms of assembly, oligomerizes as a right-handed, spiral filament on DNA at oriC.

The protein resides in the cytoplasm. Plays an essential role in the initiation and regulation of chromosomal replication. ATP-DnaA binds to the origin of replication (oriC) to initiate formation of the DNA replication initiation complex once per cell cycle. Binds the DnaA box (a 9 base pair repeat at the origin) and separates the double-stranded (ds)DNA. Forms a right-handed helical filament on oriC DNA; dsDNA binds to the exterior of the filament while single-stranded (ss)DNA is stabiized in the filament's interior. The ATP-DnaA-oriC complex binds and stabilizes one strand of the AT-rich DNA unwinding element (DUE), permitting loading of DNA polymerase. After initiation quickly degrades to an ADP-DnaA complex that is not apt for DNA replication. Binds acidic phospholipids. This is Chromosomal replication initiator protein DnaA from Shewanella piezotolerans (strain WP3 / JCM 13877).